The following is a 287-amino-acid chain: 1-acyl-sn-glycerol-3-phosphate acyltransferase alpha (287 aa).

Residues 1–26 (MELWPGAGTLLLLLFLLLLLLLPTLW) form the signal peptide. At 27–37 (FCSPSAKYFFK) the chain is on the lumenal side. A helical membrane pass occupies residues 38–58 (MAFYNGWILFLAVLAIPVCAV). Topologically, residues 59–127 (RGRNVENMKI…PGRCVPIAKR (69 aa)) are cytoplasmic. The HXXXXD motif motif lies at 104–109 (HQSSLD). Residues 128–148 (ELLWAGSAGLACWLAGVIFID) traverse the membrane as a helical segment. Residues 149-287 (RKRTGDAISV…KPGGVGEAGL (139 aa)) lie on the Lumenal side of the membrane. An EGTR motif motif is present at residues 178–181 (EGTR).

This sequence belongs to the 1-acyl-sn-glycerol-3-phosphate acyltransferase family.

It is found in the endoplasmic reticulum membrane. It carries out the reaction a 1-acyl-sn-glycero-3-phosphate + an acyl-CoA = a 1,2-diacyl-sn-glycero-3-phosphate + CoA. The catalysed reaction is 1-(9Z-octadecenoyl)-sn-glycero-3-phosphate + (9Z)-octadecenoyl-CoA = 1,2-di-(9Z-octadecenoyl)-sn-glycero-3-phosphate + CoA. It catalyses the reaction 1-(9Z-octadecenoyl)-sn-glycero-3-phosphate + hexadecanoyl-CoA = 1-(9Z)-octadecenoyl-2-hexadecanoyl-sn-glycero-3-phosphate + CoA. The enzyme catalyses heptadecanoyl-CoA + 1-(9Z-octadecenoyl)-sn-glycero-3-phosphate = 1-(9Z)-octadecenoyl-2-heptadecanoyl-sn-glycero-3-phosphate + CoA. It carries out the reaction 1-(9Z-octadecenoyl)-sn-glycero-3-phosphate + octadecanoyl-CoA = 1-(9Z-octadecenoyl)-2-octadecanoyl-sn-glycero-3-phosphate + CoA. The catalysed reaction is 1-(9Z-octadecenoyl)-sn-glycero-3-phosphate + (9Z,12Z)-octadecadienoyl-CoA = 1-(9Z)-octadecenoyl-2-(9Z,12Z)-octadecadienoyl-sn-glycero-3-phosphate + CoA. It catalyses the reaction 1-(9Z-octadecenoyl)-sn-glycero-3-phosphate + tetradecanoyl-CoA = 1-(9Z)-octadecenoyl-2-tetradecanoyl-sn-glycero-3-phosphate + CoA. The enzyme catalyses pentadecanoyl-CoA + 1-(9Z-octadecenoyl)-sn-glycero-3-phosphate = 1-(9Z)-octadecenoyl-2-pentadecanoyl-sn-glycero-3-phosphate + CoA. It carries out the reaction 1-hexadecanoyl-sn-glycero-3-phosphate + (9Z)-octadecenoyl-CoA = 1-hexadecanoyl-2-(9Z-octadecenoyl)-sn-glycero-3-phosphate + CoA. The catalysed reaction is 1-(9Z,12Z,15Z)-octadecatrienoyl-sn-glycero-3-phosphate + (9Z)-octadecenoyl-CoA = 1-(9Z,12Z,15Z)-octadecatrienoyl-2-(9Z)-octadecenoyl-sn-glycero-3-phosphate + CoA. It catalyses the reaction 1-(6Z,9Z,12Z-octadecatrienoyl)-sn-glycero-3-phosphate + (9Z)-octadecenoyl-CoA = (6Z,9Z,12Z)-octadecatrienoyl-2-(9Z)-octadecenoyl-sn-glycero-3-phosphate + CoA. The enzyme catalyses 1-eicosanoyl-sn-glycero-3-phosphate + (9Z)-octadecenoyl-CoA = 1-eicosanoyl-2-(9Z)-octadecenoyl-sn-glycero-3-phosphate + CoA. It carries out the reaction 1-tetradecanoyl-sn-glycerol 3-phosphate + (9Z)-octadecenoyl-CoA = 1-tetradecanoyl-2-(9Z)-octadecenoyl-sn-glycero-3-phosphate + CoA. The catalysed reaction is 1-(9Z-octadecenoyl)-sn-glycero-3-phosphate + (5Z,8Z,11Z,14Z)-eicosatetraenoyl-CoA = 1-(9Z)-octadecenoyl-2-(5Z,8Z,11Z,14Z)-eicosatetraenoyl-sn-glycero-3-phosphate + CoA. It catalyses the reaction 1-(9Z-octadecenoyl)-sn-glycero-3-phosphate + dodecanoyl-CoA = 1-(9Z)-octadecenoyl-2-dodecanoyl-sn-glycero-3-phosphate + CoA. The enzyme catalyses (6Z)-octadecenoyl-CoA + 1-(9Z-octadecenoyl)-sn-glycero-3-phosphate = 1-(9Z)-octadecenoyl-2-(6Z)-octadecenoyl-sn-glycero-3-phosphate + CoA. It carries out the reaction (11Z)-octadecenoyl-CoA + 1-(9Z-octadecenoyl)-sn-glycero-3-phosphate = 1-(9Z)-octadecenoyl-2-(11Z)-octadecenoyl-sn-glycero-3-phosphate + CoA. The catalysed reaction is (9Z)-hexadecenoyl-CoA + 1-(9Z-octadecenoyl)-sn-glycero-3-phosphate = 1-(9Z-octadecenoyl)-2-(9Z-hexadecenoyl)-sn-glycero-3-phosphate + CoA. It participates in phospholipid metabolism; CDP-diacylglycerol biosynthesis; CDP-diacylglycerol from sn-glycerol 3-phosphate: step 2/3. Converts 1-acyl-sn-glycerol-3-phosphate (lysophosphatidic acid or LPA) into 1,2-diacyl-sn-glycerol-3-phosphate (phosphatidic acid or PA) by incorporating an acyl moiety at the sn-2 position of the glycerol backbone. In Bos taurus (Bovine), this protein is 1-acyl-sn-glycerol-3-phosphate acyltransferase alpha (AGPAT1).